The primary structure comprises 75 residues: Large ribosomal subunit protein bL28 (75 aa).

This sequence belongs to the bacterial ribosomal protein bL28 family.

This is Large ribosomal subunit protein bL28 from Baumannia cicadellinicola subsp. Homalodisca coagulata.